Reading from the N-terminus, the 663-residue chain is Probable E3 ubiquitin ligase complex SCF subunit sconB (663 aa).

Polar residues-rich tracts occupy residues 1-15 and 56-77; these read MDTD…QSAV and TADT…TPTE. The tract at residues 1–78 is disordered; the sequence is MDTDNSTLPT…SLFNSTPTEG (78 aa). Residues 195 to 241 form the F-box domain; it reads IDFVTALPPEISFKILSYLDTASLCSAAQVSHSWRALADDDVVWHRM. WD repeat units follow at residues 320–359, 361–399, 400–437, and 439–480; these read GHTN…RTLR, HEST…STYT, GHQG…TRIL, and GHAD…HSYA. Residues 502–522 show a composition bias toward basic and acidic residues; it reads SNCADDRSDRLSGSESPDHRG. Residues 502–547 form a disordered region; it reads SNCADDRSDRLSGSESPDHRGSHGYGSNNAPDQQPNTSAPPTEPMS. Polar residues predominate over residues 526-541; sequence YGSNNAPDQQPNTSAP. WD repeat units lie at residues 544–589, 592–629, and 632–663; these read EPMS…CLRT, GHIE…CERT, and GHRG…SFKA.

It belongs to the WD repeat MET30/SCONB/SCON-2 family. In terms of assembly, component of the SCF(sconB) E3 ubiquitin ligase complex.

Its pathway is protein modification; protein ubiquitination. Its function is as follows. Component of the SCF(sconB) E3 ubiquitin ligase complex involved in the regulation of sulfur metabolite repression, probably by mediating the inactivation or degradation of the metR transcription factor. The sequence is that of Probable E3 ubiquitin ligase complex SCF subunit sconB (sconB) from Trichophyton verrucosum (strain HKI 0517).